The sequence spans 595 residues: Adenine deaminase 2 (595 aa).

Belongs to the metallo-dependent hydrolases superfamily. Adenine deaminase family. The cofactor is Mn(2+).

The enzyme catalyses adenine + H2O + H(+) = hypoxanthine + NH4(+). The sequence is that of Adenine deaminase 2 from Rhizobium johnstonii (strain DSM 114642 / LMG 32736 / 3841) (Rhizobium leguminosarum bv. viciae).